The sequence spans 325 residues: Collagen alpha-1(IX) chain (325 aa).

A compositionally biased stretch (low complexity) spans 1-54; that stretch reads PGQLGNSGKPGQQGPPGEVGPRGPRGLPGSRGPVGPEGSPGIPGKLGPLGSPGL. 2 disordered regions span residues 1 to 163 and 187 to 325; these read PGQL…APTD and RPDT…GPDK. The segment covering 198 to 208 has biased composition (pro residues); it reads RPGPPGPPGPP. The span at 237–249 shows a compositional bias: basic and acidic residues; the sequence is PKGDLGEKGERGP. Pro residues predominate over residues 292 to 304; that stretch reads VPGPPGPPGPPGF.

This sequence belongs to the fibril-associated collagens with interrupted helices (FACIT) family. Heterotrimer of an alpha 1(IX), an alpha 2(IX) and an alpha 3(IX) chain. In terms of processing, covalently linked to the telopeptides of type II collagen by lysine-derived cross-links. Prolines at the third position of the tripeptide repeating unit (G-X-Y) are hydroxylated in some or all of the chains.

It is found in the secreted. The protein resides in the extracellular space. Its subcellular location is the extracellular matrix. In terms of biological role, structural component of hyaline cartilage and vitreous of the eye. This chain is Collagen alpha-1(IX) chain (Col9a1), found in Rattus norvegicus (Rat).